A 608-amino-acid chain; its full sequence is Auxin response factor 3 (608 aa).

The segment at 1-40 (MGGLIDLNVMETEEDETQTQTPSSASGSVSPTSSSSASVS) is disordered. The segment covering 18-40 (QTQTPSSASGSVSPTSSSSASVS) has biased composition (low complexity). The segment at residues 159–261 (FCKTLTASDT…KLRLGVRRAS (103 aa)) is a DNA-binding region (TF-B3).

This sequence belongs to the ARF family. In terms of assembly, homo and heterodimers. Expressed in the whole plant.

Its subcellular location is the nucleus. Auxin response factors (ARFs) are transcriptional factors that bind specifically to the DNA sequence 5'-TGTCTC-3' found in the auxin-responsive promoter elements (AuxREs). Could act as transcriptional activator or repressor. Formation of heterodimers with Aux/IAA proteins may alter their ability to modulate early auxin response genes expression. Involved in the establishment or elaboration of tissue patterning during gynoecial development. In Arabidopsis thaliana (Mouse-ear cress), this protein is Auxin response factor 3 (ARF3).